The sequence spans 554 residues: Movement protein Hsp70h (554 aa).

This sequence belongs to the heat shock protein 70 family.

It localises to the virion. Functionally, transports viral genome to neighboring plant cells directly through plasmosdesmata, without any budding. The movement protein allows efficient cell to cell propagation, by bypassing the host cell wall barrier. Two movement proteins, p6, Hsp70h and three structural proteins, CP, CPm, and P64 are essential for cell-cell movement. Also plays a role in virion formation. Together with CPm and p64, encapsidates the 5'-terminal portion of the viral genome. This is Movement protein Hsp70h from Lettuce infectious yellows virus (isolate United States/92) (LIYV).